The sequence spans 344 residues: Uroporphyrinogen decarboxylase (344 aa).

Residues 23 to 27 (RQAGR), aspartate 73, tyrosine 149, threonine 204, and histidine 321 contribute to the substrate site.

The protein belongs to the uroporphyrinogen decarboxylase family. Homodimer.

The protein localises to the cytoplasm. The enzyme catalyses uroporphyrinogen III + 4 H(+) = coproporphyrinogen III + 4 CO2. The protein operates within porphyrin-containing compound metabolism; protoporphyrin-IX biosynthesis; coproporphyrinogen-III from 5-aminolevulinate: step 4/4. Catalyzes the decarboxylation of four acetate groups of uroporphyrinogen-III to yield coproporphyrinogen-III. The chain is Uroporphyrinogen decarboxylase from Francisella tularensis subsp. novicida (strain U112).